Consider the following 1085-residue polypeptide: RecBCD enzyme subunit RecC (1085 aa).

Belongs to the RecC family. As to quaternary structure, heterotrimer of RecB, RecC and RecD. All subunits contribute to DNA-binding.

A helicase/nuclease that prepares dsDNA breaks (DSB) for recombinational DNA repair. Binds to DSBs and unwinds DNA via a highly rapid and processive ATP-dependent bidirectional helicase activity. Holoenzyme degrades any linearized DNA that is unable to undergo homologous recombination. In the holoenzyme this subunit recognizes the wild-type Chi sequence, and when added to isolated RecB increases its ATP-dependent helicase processivity. Unlike the case in E.coli, suppresses RecA-dependent homologous recombination, is instead required for single-strand annealing pathway repair of DSB. The chain is RecBCD enzyme subunit RecC from Mycolicibacterium smegmatis (strain ATCC 700084 / mc(2)155) (Mycobacterium smegmatis).